Here is a 75-residue protein sequence, read N- to C-terminus: Beta-defensin 30 (75 aa).

An N-terminal signal peptide occupies residues 1 to 22 (MGSLQLTLVLFVLLSYVPPVRS). 3 disulfides stabilise this stretch: Cys35-Cys62, Cys42-Cys56, and Cys46-Cys63.

The protein belongs to the beta-defensin family.

Its subcellular location is the secreted. Functionally, has antibacterial activity. This chain is Beta-defensin 30 (Defb30), found in Mus musculus (Mouse).